The sequence spans 189 residues: Lipid A acyltransferase PagP (189 aa).

An N-terminal signal peptide occupies residues 1 to 24 (MLRRFSLFSLGFLGWLLVSGNASA). Residues His61, Asp104, and Ser105 contribute to the active site.

The protein belongs to the lipid A palmitoyltransferase family. As to quaternary structure, homodimer.

It localises to the cell outer membrane. It carries out the reaction a lipid A + a 1,2-diacyl-sn-glycero-3-phosphocholine = a hepta-acyl lipid A + a 2-acyl-sn-glycero-3-phosphocholine. The enzyme catalyses a lipid IVA + a 1,2-diacyl-sn-glycero-3-phosphocholine = a lipid IVB + a 2-acyl-sn-glycero-3-phosphocholine. It catalyses the reaction a lipid IIA + a 1,2-diacyl-sn-glycero-3-phosphocholine = a lipid IIB + a 2-acyl-sn-glycero-3-phosphocholine. Functionally, transfers a fatty acid residue from the sn-1 position of a phospholipid to the N-linked hydroxyfatty acid chain on the proximal unit of lipid A or its precursors. The protein is Lipid A acyltransferase PagP of Klebsiella pneumoniae subsp. pneumoniae (strain ATCC 700721 / MGH 78578).